The following is a 120-amino-acid chain: Aspartate 1-decarboxylase (120 aa).

Ser25 acts as the Schiff-base intermediate with substrate; via pyruvic acid in catalysis. Ser25 carries the pyruvic acid (Ser) modification. Residue Thr57 coordinates substrate. Tyr58 serves as the catalytic Proton donor. 72 to 74 (GAA) serves as a coordination point for substrate.

Belongs to the PanD family. Heterooctamer of four alpha and four beta subunits. Pyruvate serves as cofactor. Post-translationally, is synthesized initially as an inactive proenzyme, which is activated by self-cleavage at a specific serine bond to produce a beta-subunit with a hydroxyl group at its C-terminus and an alpha-subunit with a pyruvoyl group at its N-terminus.

Its subcellular location is the cytoplasm. The catalysed reaction is L-aspartate + H(+) = beta-alanine + CO2. Its pathway is cofactor biosynthesis; (R)-pantothenate biosynthesis; beta-alanine from L-aspartate: step 1/1. Functionally, catalyzes the pyruvoyl-dependent decarboxylation of aspartate to produce beta-alanine. The polypeptide is Aspartate 1-decarboxylase (Helicobacter hepaticus (strain ATCC 51449 / 3B1)).